The sequence spans 381 residues: ELMO domain-containing protein 3 (381 aa).

The ELMO domain occupies 170–324 (THGRVLQTIY…DLEALAKKSP (155 aa)).

In terms of tissue distribution, both isoform 1 and isoform 2 are widely expressed.

Its subcellular location is the cell projection. The protein resides in the stereocilium. It localises to the kinocilium. It is found in the cytoplasm. The protein localises to the cytoskeleton. In terms of biological role, acts as a GTPase-activating protein (GAP) for ARL2 with low specific activity. The polypeptide is ELMO domain-containing protein 3 (Elmod3) (Mus musculus (Mouse)).